The primary structure comprises 240 residues: MDVRGTAIRSDAGLFGYERALVRRGLGPVAGVDEAGRGACAGPMVVAAVVLDQRRLGLLRRLADSKLLTERVREEVHADVLAAAAAVSTIVIPAAEIDRNGVHVANIMGMRRAVAVLDVRPRYVLTDGFAVAGLGAESLAVIKGDLMVGCIAAASVVAKVTRDRIMRSLHKRYPEYDFAQHKGYVTAAHTAAMTRYGPCEQHRLSYVNVAALAAPAGETRSLRLEDRVAMTSLRGVTETA.

Residues 27–226 (GPVAGVDEAG…GETRSLRLED (200 aa)) enclose the RNase H type-2 domain. A divalent metal cation is bound by residues Asp-33, Glu-34, and Asp-127.

It belongs to the RNase HII family. Requires Mn(2+) as cofactor. The cofactor is Mg(2+).

The protein localises to the cytoplasm. The catalysed reaction is Endonucleolytic cleavage to 5'-phosphomonoester.. Functionally, endonuclease that specifically degrades the RNA of RNA-DNA hybrids. The protein is Ribonuclease HII of Parafrankia sp. (strain EAN1pec).